A 213-amino-acid polypeptide reads, in one-letter code: Phosphatidylserine decarboxylase proenzyme (213 aa).

S182 (schiff-base intermediate with substrate; via pyruvic acid) is an active-site residue. S182 is modified (pyruvic acid (Ser); by autocatalysis).

It belongs to the phosphatidylserine decarboxylase family. PSD-A subfamily. As to quaternary structure, heterodimer of a large membrane-associated beta subunit and a small pyruvoyl-containing alpha subunit. Requires pyruvate as cofactor. Post-translationally, is synthesized initially as an inactive proenzyme. Formation of the active enzyme involves a self-maturation process in which the active site pyruvoyl group is generated from an internal serine residue via an autocatalytic post-translational modification. Two non-identical subunits are generated from the proenzyme in this reaction, and the pyruvate is formed at the N-terminus of the alpha chain, which is derived from the carboxyl end of the proenzyme. The post-translation cleavage follows an unusual pathway, termed non-hydrolytic serinolysis, in which the side chain hydroxyl group of the serine supplies its oxygen atom to form the C-terminus of the beta chain, while the remainder of the serine residue undergoes an oxidative deamination to produce ammonia and the pyruvoyl prosthetic group on the alpha chain.

It localises to the cell membrane. It carries out the reaction a 1,2-diacyl-sn-glycero-3-phospho-L-serine + H(+) = a 1,2-diacyl-sn-glycero-3-phosphoethanolamine + CO2. The protein operates within phospholipid metabolism; phosphatidylethanolamine biosynthesis; phosphatidylethanolamine from CDP-diacylglycerol: step 2/2. In terms of biological role, catalyzes the formation of phosphatidylethanolamine (PtdEtn) from phosphatidylserine (PtdSer). In Geotalea daltonii (strain DSM 22248 / JCM 15807 / FRC-32) (Geobacter daltonii), this protein is Phosphatidylserine decarboxylase proenzyme.